The chain runs to 1054 residues: Trehalose synthase complex regulatory subunit TPS3 (1054 aa).

The segment at 112-133 (AANSGIPPANNPVSSGSTAQRP) is disordered. Polar residues predominate over residues 122-132 (NPVSSGSTAQR). Phosphoserine is present on residues serine 148, serine 150, and serine 181. Disordered stretches follow at residues 155–203 (ASSI…PVSK) and 223–250 (QQQA…SSSN). Polar residues predominate over residues 170 to 182 (LSSSLMKNPNLSF). Positions 235 to 249 (SGSTAGDSSIASSSS) are enriched in low complexity. At threonine 265 the chain carries Phosphothreonine. Phosphoserine occurs at positions 267 and 273. The interval 287-778 (KFGGYSNNAK…SNQETSTVFN (492 aa)) is glycosyltransferase. Residue serine 960 is modified to Phosphoserine.

This sequence in the N-terminal section; belongs to the glycosyltransferase 20 family. In terms of assembly, the trehalose synthase complex is composed of the two catalytic subunits TPS1 and TPS2 and at least one of the two regulatory subunits TPS3 or TSL1.

It is found in the cytoplasm. Regulatory subunit of the trehalose synthase complex that catalyzes the production of trehalose from glucose-6-phosphate and UDP-glucose in a two step process. May stabilize the trehalose synthase complex. In Saccharomyces cerevisiae (strain ATCC 204508 / S288c) (Baker's yeast), this protein is Trehalose synthase complex regulatory subunit TPS3 (TPS3).